A 100-amino-acid polypeptide reads, in one-letter code: Small ribosomal subunit protein uS14c (100 aa).

This sequence belongs to the universal ribosomal protein uS14 family. In terms of assembly, part of the 30S ribosomal subunit.

It localises to the plastid. Its subcellular location is the chloroplast. In terms of biological role, binds 16S rRNA, required for the assembly of 30S particles. The sequence is that of Small ribosomal subunit protein uS14c from Nymphaea alba (White water-lily).